Here is a 122-residue protein sequence, read N- to C-terminus: Large ribosomal subunit protein uL14 (122 aa).

It belongs to the universal ribosomal protein uL14 family. Part of the 50S ribosomal subunit. Forms a cluster with proteins L3 and L19. In the 70S ribosome, L14 and L19 interact and together make contacts with the 16S rRNA in bridges B5 and B8.

In terms of biological role, binds to 23S rRNA. Forms part of two intersubunit bridges in the 70S ribosome. The chain is Large ribosomal subunit protein uL14 from Rickettsia africae (strain ESF-5).